Reading from the N-terminus, the 253-residue chain is MGRVIRAQRKSGGIFQAHTRLRKGAAQLRTLDFAERHGYIRGVVQKIIHDPGRGAPLAKVAFRNPYHYRTDVETFVATEGMYTGQFVYCGKNAALTVGNVLPVGEMPEGTIISNVEEKAGDRGALGRSSGNYVIIVGHDVDTGKTRVKLPSGAKKVVPSSARGVVGIVAGGGRIDKPLLKAGRAFHKYRVKRNCWPRTRGVAMNPVDHPHGGGNHQHVGHSTTVPRQSAPGQKVGLIAARRTGLLRGAAAVEN.

Belongs to the universal ribosomal protein uL2 family. As to quaternary structure, component of the large ribosomal subunit (LSU). Mature yeast ribosomes consist of a small (40S) and a large (60S) subunit. The 40S small subunit contains 1 molecule of ribosomal RNA (18S rRNA) and at least 33 different proteins. The large 60S subunit contains 3 rRNA molecules (25S, 5.8S and 5S rRNA) and at least 46 different proteins.

The protein localises to the cytoplasm. Its subcellular location is the nucleus. Its function is as follows. Component of the ribosome, a large ribonucleoprotein complex responsible for the synthesis of proteins in the cell. The small ribosomal subunit (SSU) binds messenger RNAs (mRNAs) and translates the encoded message by selecting cognate aminoacyl-transfer RNA (tRNA) molecules. The large subunit (LSU) contains the ribosomal catalytic site termed the peptidyl transferase center (PTC), which catalyzes the formation of peptide bonds, thereby polymerizing the amino acids delivered by tRNAs into a polypeptide chain. The nascent polypeptides leave the ribosome through a tunnel in the LSU and interact with protein factors that function in enzymatic processing, targeting, and the membrane insertion of nascent chains at the exit of the ribosomal tunnel. This chain is Large ribosomal subunit protein uL2C (rpl803), found in Schizosaccharomyces pombe (strain 972 / ATCC 24843) (Fission yeast).